The primary structure comprises 450 residues: Probable transporter MCH1 (450 aa).

Helical transmembrane passes span 32-52, 69-89, 96-116, 127-147, 157-177, 199-219, 255-275, 290-309, 320-340, 355-375, 378-398, and 423-443; these read AFLVALCACIPAGFISQISLY, VLFSAVNLGGYITPPLLGLLS, MLSWLSFVGFVPTYAYAAWVF, VLCFTLIGISTNALYFSALFT, LCSISLPATFYGMASVLGSQL, LAVAYTLISFCMWFATSIVTM, PAAYFMALVLLLSLGPMEMFL, VLPEFAIASTCSRFLSGLII, MSVQWAVLLLGVVGQWIVVLA, LSGACYGGLFTVSPILTLAVW, AVFGTAYGSFMITPAVGSILF, and VFWSSTSALAIALLFSVLMYL.

Belongs to the major facilitator superfamily.

The protein localises to the vacuole membrane. Its function is as follows. Probable transporter. This Eremothecium gossypii (strain ATCC 10895 / CBS 109.51 / FGSC 9923 / NRRL Y-1056) (Yeast) protein is Probable transporter MCH1 (MCH1).